The chain runs to 293 residues: Bifunctional protein FolD (293 aa).

Residues 165–167, Thr192, and Val233 contribute to the NADP(+) site; that span reads GRG.

It belongs to the tetrahydrofolate dehydrogenase/cyclohydrolase family. As to quaternary structure, homodimer.

The catalysed reaction is (6R)-5,10-methylene-5,6,7,8-tetrahydrofolate + NADP(+) = (6R)-5,10-methenyltetrahydrofolate + NADPH. It catalyses the reaction (6R)-5,10-methenyltetrahydrofolate + H2O = (6R)-10-formyltetrahydrofolate + H(+). Its pathway is one-carbon metabolism; tetrahydrofolate interconversion. Its function is as follows. Catalyzes the oxidation of 5,10-methylenetetrahydrofolate to 5,10-methenyltetrahydrofolate and then the hydrolysis of 5,10-methenyltetrahydrofolate to 10-formyltetrahydrofolate. This chain is Bifunctional protein FolD, found in Streptomyces griseus subsp. griseus (strain JCM 4626 / CBS 651.72 / NBRC 13350 / KCC S-0626 / ISP 5235).